The following is a 315-amino-acid chain: Protoheme IX farnesyltransferase (315 aa).

9 consecutive transmembrane segments (helical) span residues 32–52, 53–73, 93–113, 120–140, 153–173, 180–200, 226–246, 249–269, and 295–315; these read VMSLVVFTGLVGLVLAPGHMN, PVLAVISILCIAVGAGASGAL, IPAGIIAPNQVLAFGLTLSAF, LMVNWLAAALLAFTIFFYAVI, IVIGGAAGAFPPMIGWAAATG, LVLFMIIFLWTPPHFWALSLF, ALFYAVLMAPVGVLPWVMGFA, FYGVVSTLLGLAFVYYAWRLW, and IFAVLLFEALTFKLLAAFGVF.

It belongs to the UbiA prenyltransferase family. Protoheme IX farnesyltransferase subfamily.

The protein resides in the cell inner membrane. The enzyme catalyses heme b + (2E,6E)-farnesyl diphosphate + H2O = Fe(II)-heme o + diphosphate. The protein operates within porphyrin-containing compound metabolism; heme O biosynthesis; heme O from protoheme: step 1/1. Its function is as follows. Converts heme B (protoheme IX) to heme O by substitution of the vinyl group on carbon 2 of heme B porphyrin ring with a hydroxyethyl farnesyl side group. This chain is Protoheme IX farnesyltransferase, found in Brucella suis (strain ATCC 23445 / NCTC 10510).